We begin with the raw amino-acid sequence, 1131 residues long: Phytochrome (1131 aa).

The interval 1 to 30 (MASNSRHTQSQSTGSNNRRSSTNTNTTTNK) is disordered. Residues 9-29 (QSQSTGSNNRRSSTNTNTTTN) show a composition bias toward low complexity. Positions 227–406 (DVGLLCDTVV…ALGLQLNMEL (180 aa)) constitute a GAF domain. Residue Cys-332 participates in phytochromobilin binding. PAS domains follow at residues 621-692 (VASE…LRGE) and 755-826 (DYRS…TIVL). Positions 903–1123 (YIRQEIKNPL…LVNVEFPMAQ (221 aa)) constitute a Histidine kinase domain.

The protein belongs to the phytochrome family. In terms of assembly, homodimer. In terms of processing, contains one covalently linked phytochromobilin chromophore.

In terms of biological role, regulatory photoreceptor which exists in two forms that are reversibly interconvertible by light: the Pr form that absorbs maximally in the red region of the spectrum and the Pfr form that absorbs maximally in the far-red region. Photoconversion of Pr to Pfr induces an array of morphogenic responses, whereas reconversion of Pfr to Pr cancels the induction of those responses. Pfr controls the expression of a number of nuclear genes including those encoding the small subunit of ribulose-bisphosphate carboxylase, chlorophyll A/B binding protein, protochlorophyllide reductase, rRNA, etc. It also controls the expression of its own gene(s) in a negative feedback fashion. The sequence is that of Phytochrome from Pinus sylvestris (Scotch pine).